The following is a 251-amino-acid chain: Large ribosomal subunit protein uL2 (251 aa).

A compositionally biased stretch (basic residues) spans 1 to 12; it reads MGKRLRVQRHGR. The segment at 1–22 is disordered; it reads MGKRLRVQRHGRGTPQWRNRGH.

Belongs to the universal ribosomal protein uL2 family. Part of the 50S ribosomal subunit. Forms a bridge to the 30S subunit in the 70S ribosome.

One of the primary rRNA binding proteins. Required for association of the 30S and 50S subunits to form the 70S ribosome, for tRNA binding and peptide bond formation. It has been suggested to have peptidyltransferase activity; this is somewhat controversial. Makes several contacts with the 16S rRNA in the 70S ribosome. The chain is Large ribosomal subunit protein uL2 from Ignicoccus hospitalis (strain KIN4/I / DSM 18386 / JCM 14125).